The following is a 421-amino-acid chain: Diaminopimelate decarboxylase (421 aa).

At Lys62 the chain carries N6-(pyridoxal phosphate)lysine. Residues Gly237 and 279 to 282 contribute to the pyridoxal 5'-phosphate site; that span reads EPGR. Arg282, Arg319, and Tyr323 together coordinate substrate. Cys349 acts as the Proton donor in catalysis. 2 residues coordinate substrate: Glu350 and Tyr379. Tyr379 contacts pyridoxal 5'-phosphate.

Belongs to the Orn/Lys/Arg decarboxylase class-II family. LysA subfamily. Homodimer. Requires pyridoxal 5'-phosphate as cofactor.

It catalyses the reaction meso-2,6-diaminopimelate + H(+) = L-lysine + CO2. Its pathway is amino-acid biosynthesis; L-lysine biosynthesis via DAP pathway; L-lysine from DL-2,6-diaminopimelate: step 1/1. Functionally, specifically catalyzes the decarboxylation of meso-diaminopimelate (meso-DAP) to L-lysine. Plays a role in beta-lactam antibiotic resistance. The polypeptide is Diaminopimelate decarboxylase (lysA) (Staphylococcus aureus (strain COL)).